A 520-amino-acid chain; its full sequence is mRNA-capping enzyme subunit beta (520 aa).

The disordered stretch occupies residues 1–185 (MNVGSILNDD…PQPVFDDQDD (185 aa)). Composition is skewed to polar residues over residues 11–21 (PPSSGNANGND) and 44–56 (ITSM…SDST). Positions 92–108 (SSSSVGSSEHSSARSSP) are enriched in low complexity. Basic and acidic residues-rich tracts occupy residues 126–135 (PATKTEKKAE) and 149–176 (KLEE…KKEP).

This sequence belongs to the fungal TPase family. As to quaternary structure, heterodimer. The mRNA-capping enzyme is composed of two separate chains alpha and beta, respectively a mRNA guanylyltransferase and an mRNA 5'-triphosphate monophosphatase. The cofactor is Mg(2+).

The protein localises to the nucleus. It carries out the reaction a 5'-end triphospho-ribonucleoside in mRNA + H2O = a 5'-end diphospho-ribonucleoside in mRNA + phosphate + H(+). In terms of biological role, first step of mRNA capping. Converts the 5'-triphosphate end of a nascent mRNA chain into a diphosphate end. This chain is mRNA-capping enzyme subunit beta (CET1), found in Candida albicans (strain SC5314 / ATCC MYA-2876) (Yeast).